Consider the following 766-residue polypeptide: NADH-dependent flavin oxidoreductase iliE (766 aa).

The span at 1 to 13 shows a compositional bias: polar residues; it reads MSEQLGSHITTPS. The disordered stretch occupies residues 1 to 24; the sequence is MSEQLGSHITTPSSHDDASKDKRP. A compositionally biased stretch (basic and acidic residues) spans 14–24; that stretch reads SHDDASKDKRP. N-linked (GlcNAc...) asparagine glycosylation is present at asparagine 30. 61–64 contacts FMN; that stretch reads AATA. 2 N-linked (GlcNAc...) asparagine glycosylation sites follow: asparagine 70 and asparagine 136. An FMN-binding site is contributed by glutamine 143. 224-227 is a binding site for substrate; it reads HAGH. 385–386 contacts FMN; sequence AR. The J domain occupies 551 to 622; that stretch reads TPYDILAMRK…SKRSLYDTQG (72 aa). Residues asparagine 634, asparagine 650, and asparagine 654 are each glycosylated (N-linked (GlcNAc...) asparagine). The helical transmembrane segment at 675–695 threads the bilayer; the sequence is MYMSNGVFATLVVMMCMIGAF.

It belongs to the NADH:flavin oxidoreductase/NADH oxidase family.

It is found in the membrane. NADH-dependent flavin oxidoreductase; part of the gene cluster that mediates the biosynthesis of ilicicolin H, a 4-hydroxy-2-pyridonealkaloid that has potent and broad antifungal activities by inhibiting the mitochondrial respiration chain. The biosynthesis of ilicicolin H starts with formation of the tetramic acid by the hybrid PKS-NRPS synthetase iliA with the partnering trans-enoyl reductase iliB since iliA lacks a designated enoylreductase (ER) domain. The cytochrome P450 monooxygenase iliC then catalyzes the ring expansion of the tetramate to the acyclic 2-pyridone. The pericyclase iliD further converts the acyclic 2-pyridone into 8-epi-ilicicolin H. 8-epi-ilicicolin H might then spontaneously convert to ilicicolin H since ilicicolin H is produced in the absence of the epimerase iliE, in contrast to what was observed for the Talaromyces variabilis ilicolin H biosynthetic pathway. The sequence is that of NADH-dependent flavin oxidoreductase iliE from Neonectria sp. (strain DH2).